The primary structure comprises 152 residues: Acidic phospholipase A2 S17-58 (152 aa).

Positions 1-19 (MYPAHLLVLLAVCVSLLGA) are cleaved as a signal peptide. The propeptide occupies 20-27 (SNIPLPSL). 7 cysteine pairs are disulfide-bonded: C38/C104, C54/C151, C56/C72, C71/C132, C78/C125, C88/C118, and C111/C123. Ca(2+) contacts are provided by Y55, G57, and G59. H75 is an active-site residue. D76 contacts Ca(2+). D126 is an active-site residue.

Belongs to the phospholipase A2 family. Group I subfamily. D49 sub-subfamily. The cofactor is Ca(2+). As to expression, expressed by the venom gland.

It localises to the secreted. The enzyme catalyses a 1,2-diacyl-sn-glycero-3-phosphocholine + H2O = a 1-acyl-sn-glycero-3-phosphocholine + a fatty acid + H(+). In terms of biological role, snake venom phospholipase A2 (PLA2) that inhibits collagen-induced platelet aggregation. PLA2 catalyzes the calcium-dependent hydrolysis of the 2-acyl groups in 3-sn-phosphoglycerides. The chain is Acidic phospholipase A2 S17-58 from Austrelaps superbus (Lowland copperhead snake).